The following is a 460-amino-acid chain: V-type ATP synthase beta chain (460 aa).

The protein belongs to the ATPase alpha/beta chains family.

Its function is as follows. Produces ATP from ADP in the presence of a proton gradient across the membrane. The V-type beta chain is a regulatory subunit. This is V-type ATP synthase beta chain from Dictyoglomus turgidum (strain DSM 6724 / Z-1310).